We begin with the raw amino-acid sequence, 254 residues long: Polysaccharide deacetylase domain-containing protein ECU11_0510 (254 aa).

A NodB homology domain is found at 26-210; the sequence is GMIAINFVDG…IGKDKGYRFV (185 aa).

In Encephalitozoon cuniculi (strain GB-M1) (Microsporidian parasite), this protein is Polysaccharide deacetylase domain-containing protein ECU11_0510.